The following is a 385-amino-acid chain: cAMP-dependent protein kinase, catalytic subunit-like (385 aa).

A Protein kinase domain is found at 63-317 (LERIVTIGKG…TQDVKDHKWF (255 aa)). ATP-binding positions include 69-77 (IGKGTFGRV) and lysine 92. The active-site Proton acceptor is the aspartate 186. The region spanning 318-385 (EKVNWDDTLH…QRERDLFAEW (68 aa)) is the AGC-kinase C-terminal domain.

This sequence belongs to the protein kinase superfamily. Ser/Thr protein kinase family. cAMP subfamily.

The enzyme catalyses L-seryl-[protein] + ATP = O-phospho-L-seryl-[protein] + ADP + H(+). It catalyses the reaction L-threonyl-[protein] + ATP = O-phospho-L-threonyl-[protein] + ADP + H(+). The polypeptide is cAMP-dependent protein kinase, catalytic subunit-like (Caenorhabditis briggsae).